Consider the following 431-residue polypeptide: Glutamate-1-semialdehyde 2,1-aminomutase (431 aa).

Residue Lys-265 is modified to N6-(pyridoxal phosphate)lysine.

The protein belongs to the class-III pyridoxal-phosphate-dependent aminotransferase family. HemL subfamily. As to quaternary structure, homodimer. Requires pyridoxal 5'-phosphate as cofactor.

The protein localises to the cytoplasm. The catalysed reaction is (S)-4-amino-5-oxopentanoate = 5-aminolevulinate. Its pathway is porphyrin-containing compound metabolism; protoporphyrin-IX biosynthesis; 5-aminolevulinate from L-glutamyl-tRNA(Glu): step 2/2. This is Glutamate-1-semialdehyde 2,1-aminomutase from Vibrio vulnificus (strain YJ016).